A 301-amino-acid chain; its full sequence is D-alanine--D-alanine ligase (301 aa).

The ATP-grasp domain occupies 101 to 296 (KLMWRAAGLA…YPTLVRRVLE (196 aa)). An ATP-binding site is contributed by 127 to 182 (EEELGLPLFVKPAREGSSIGVTKVKERGALKAAYEEAARHDPLVIAEKGVMGGEYT). Residues Asp-250, Glu-263, and Asn-265 each contribute to the Mg(2+) site.

This sequence belongs to the D-alanine--D-alanine ligase family. Mg(2+) is required as a cofactor. It depends on Mn(2+) as a cofactor.

The protein resides in the cytoplasm. It catalyses the reaction 2 D-alanine + ATP = D-alanyl-D-alanine + ADP + phosphate + H(+). Its pathway is cell wall biogenesis; peptidoglycan biosynthesis. Its function is as follows. Cell wall formation. This is D-alanine--D-alanine ligase from Dechloromonas aromatica (strain RCB).